We begin with the raw amino-acid sequence, 244 residues long: Probable transcriptional regulatory protein MMOB1910 (244 aa).

The protein belongs to the TACO1 family.

The protein resides in the cytoplasm. The polypeptide is Probable transcriptional regulatory protein MMOB1910 (Mycoplasma mobile (strain ATCC 43663 / 163K / NCTC 11711) (Mesomycoplasma mobile)).